The sequence spans 121 residues: MAPKAEKKPKVEKRVPGKEGETSKKKAKKSNETYKIYIFKVLKQIDPNMGISSKSMSIINSIINDIFEKLAGESAKLARYNKKPTITSREIQTAVRLVFPGELAKHAVSEGTKAVTRFTVY.

The tract at residues 1–28 is disordered; that stretch reads MAPKAEKKPKVEKRVPGKEGETSKKKAK. 2 positions are modified to N6-acetyllysine: Lys-7 and Lys-13.

This sequence belongs to the histone H2B family. In terms of assembly, the nucleosome is a histone octamer containing two molecules each of H2A, H2B, H3 and H4 assembled in one H3-H4 heterotetramer and two H2A-H2B heterodimers. The octamer wraps approximately 147 bp of DNA. Can be acetylated to form H2BK6ac and H2BK33ac. In terms of tissue distribution, expressed preferentially in meristematic tissues.

It is found in the nucleus. The protein resides in the chromosome. Core component of nucleosome. Nucleosomes wrap and compact DNA into chromatin, limiting DNA accessibility to the cellular machineries which require DNA as a template. Histones thereby play a central role in transcription regulation, DNA repair, DNA replication and chromosomal stability. DNA accessibility is regulated via a complex set of post-translational modifications of histones, also called histone code, and nucleosome remodeling. The chain is Histone H2B.6 (TH123) from Triticum aestivum (Wheat).